Here is a 316-residue protein sequence, read N- to C-terminus: Ribosomal RNA small subunit methyltransferase H (316 aa).

S-adenosyl-L-methionine-binding positions include 35 to 37 (SGH), D55, F84, D105, and Q112.

Belongs to the methyltransferase superfamily. RsmH family.

The protein resides in the cytoplasm. The catalysed reaction is cytidine(1402) in 16S rRNA + S-adenosyl-L-methionine = N(4)-methylcytidine(1402) in 16S rRNA + S-adenosyl-L-homocysteine + H(+). In terms of biological role, specifically methylates the N4 position of cytidine in position 1402 (C1402) of 16S rRNA. The polypeptide is Ribosomal RNA small subunit methyltransferase H (Streptococcus pyogenes serotype M4 (strain MGAS10750)).